The sequence spans 326 residues: Tetraacyldisaccharide 4'-kinase (326 aa).

ATP is bound at residue 54–61 (SVGGTGKT).

Belongs to the LpxK family.

The enzyme catalyses a lipid A disaccharide + ATP = a lipid IVA + ADP + H(+). It functions in the pathway glycolipid biosynthesis; lipid IV(A) biosynthesis; lipid IV(A) from (3R)-3-hydroxytetradecanoyl-[acyl-carrier-protein] and UDP-N-acetyl-alpha-D-glucosamine: step 6/6. Functionally, transfers the gamma-phosphate of ATP to the 4'-position of a tetraacyldisaccharide 1-phosphate intermediate (termed DS-1-P) to form tetraacyldisaccharide 1,4'-bis-phosphate (lipid IVA). The polypeptide is Tetraacyldisaccharide 4'-kinase (Rickettsia canadensis (strain McKiel)).